The following is a 740-amino-acid chain: Ribosomal protein S6 kinase alpha-3 (740 aa).

Residues 1-38 (MPLAQLADPWQKMAVESPSDSAENGQQIMDEPMGEEEI) are disordered. Positions 18 to 27 (PSDSAENGQQ) are enriched in polar residues. The 260-residue stretch at 68–327 (FELLKVLGQG…VEEIKRHSFF (260 aa)) folds into the Protein kinase 1 domain. ATP is bound by residues 74–82 (LGQGSFGKV) and lysine 100. Residue aspartate 193 is the Proton acceptor of the active site. The residue at position 227 (serine 227) is a Phosphoserine; by PDPK1. The region spanning 328-397 (STIDWNKLYR…VAITSDDESQ (70 aa)) is the AGC-kinase C-terminal domain. At threonine 365 the chain carries Phosphothreonine. A phosphoserine mark is found at serine 369 and serine 375. Serine 386 carries the post-translational modification Phosphoserine; by autocatalysis and MAPKAPK2. Serine 415 carries the post-translational modification Phosphoserine. The region spanning 422–679 (YEVKEDIGVG…AALVLRHPWI (258 aa)) is the Protein kinase 2 domain. ATP is bound by residues 428-436 (IGVGSYSVC) and lysine 451. Tyrosine 529 is modified (phosphotyrosine; by FGFR3). The active-site Proton acceptor is aspartate 539. 2 positions are modified to phosphoserine: serine 556 and serine 715.

It belongs to the protein kinase superfamily. AGC Ser/Thr protein kinase family. S6 kinase subfamily. Forms a complex with either MAPK1/ERK2 or MAPK3/ERK1 in quiescent cells. Transiently dissociates following mitogenic stimulation. Interacts with NFATC4, ETV1/ER81 and FGFR1. Mg(2+) serves as cofactor. Activated by phosphorylation at Ser-227 by PDPK1. Autophosphorylated on Ser-386, as part of the activation process. May be phosphorylated at Thr-365 and Ser-369 by MAPK1/ERK2 and MAPK3/ERK1. Can also be activated via phosphorylation at Ser-386 by MAPKAPK2. In terms of processing, N-terminal myristoylation results in an activated kinase in the absence of added growth factors. As to expression, expressed in many tissues, highest levels in skeletal muscle.

It is found in the nucleus. It localises to the cytoplasm. It catalyses the reaction L-seryl-[protein] + ATP = O-phospho-L-seryl-[protein] + ADP + H(+). The catalysed reaction is L-threonyl-[protein] + ATP = O-phospho-L-threonyl-[protein] + ADP + H(+). Its activity is regulated as follows. Upon extracellular signal or mitogen stimulation, phosphorylated at Thr-577 in the C-terminal kinase domain (CTKD) by MAPK1/ERK2 and MAPK3/ERK1. The activated CTKD then autophosphorylates Ser-386, allowing binding of PDPK1, which in turn phosphorylates Ser-227 in the N-terminal kinase domain (NTDK) leading to the full activation of the protein and subsequent phosphorylation of the substrates by the NTKD. Serine/threonine-protein kinase that acts downstream of ERK (MAPK1/ERK2 and MAPK3/ERK1) signaling and mediates mitogenic and stress-induced activation of the transcription factors CREB1, ETV1/ER81 and NR4A1/NUR77, regulates translation through RPS6 and EIF4B phosphorylation, and mediates cellular proliferation, survival, and differentiation by modulating mTOR signaling and repressing pro-apoptotic function of BAD and DAPK1. In fibroblast, is required for EGF-stimulated phosphorylation of CREB1 and histone H3 at 'Ser-10', which results in the subsequent transcriptional activation of several immediate-early genes. In response to mitogenic stimulation (EGF and PMA), phosphorylates and activates NR4A1/NUR77 and ETV1/ER81 transcription factors and the cofactor CREBBP. Upon insulin-derived signal, acts indirectly on the transcription regulation of several genes by phosphorylating GSK3B at 'Ser-9' and inhibiting its activity. Phosphorylates RPS6 in response to serum or EGF via an mTOR-independent mechanism and promotes translation initiation by facilitating assembly of the preinitiation complex. In response to insulin, phosphorylates EIF4B, enhancing EIF4B affinity for the EIF3 complex and stimulating cap-dependent translation. Is involved in the mTOR nutrient-sensing pathway by directly phosphorylating TSC2 at 'Ser-1798', which potently inhibits TSC2 ability to suppress mTOR signaling, and mediates phosphorylation of RPTOR, which regulates mTORC1 activity and may promote rapamycin-sensitive signaling independently of the PI3K/AKT pathway. Mediates cell survival by phosphorylating the pro-apoptotic proteins BAD and DAPK1 and suppressing their pro-apoptotic function. Promotes the survival of hepatic stellate cells by phosphorylating CEBPB in response to the hepatotoxin carbon tetrachloride (CCl4). Is involved in cell cycle regulation by phosphorylating the CDK inhibitor CDKN1B, which promotes CDKN1B association with 14-3-3 proteins and prevents its translocation to the nucleus and inhibition of G1 progression. In LPS-stimulated dendritic cells, is involved in TLR4-induced macropinocytosis, and in myeloma cells, acts as effector of FGFR3-mediated transformation signaling, after direct phosphorylation at Tyr-529 by FGFR3. Negatively regulates EGF-induced MAPK1/3 phosphorylation via phosphorylation of SOS1. Phosphorylates SOS1 at 'Ser-1134' and 'Ser-1161' that create YWHAB and YWHAE binding sites and which contribute to the negative regulation of MAPK1/3 phosphorylation. Phosphorylates EPHA2 at 'Ser-897', the RPS6KA-EPHA2 signaling pathway controls cell migration. Acts as a regulator of osteoblast differentiation by mediating phosphorylation of ATF4, thereby promoting ATF4 transactivation activity. This Homo sapiens (Human) protein is Ribosomal protein S6 kinase alpha-3 (RPS6KA3).